The following is a 233-amino-acid chain: Phosphoribosylaminoimidazole-succinocarboxamide synthase (233 aa).

Belongs to the SAICAR synthetase family.

The catalysed reaction is 5-amino-1-(5-phospho-D-ribosyl)imidazole-4-carboxylate + L-aspartate + ATP = (2S)-2-[5-amino-1-(5-phospho-beta-D-ribosyl)imidazole-4-carboxamido]succinate + ADP + phosphate + 2 H(+). The protein operates within purine metabolism; IMP biosynthesis via de novo pathway; 5-amino-1-(5-phospho-D-ribosyl)imidazole-4-carboxamide from 5-amino-1-(5-phospho-D-ribosyl)imidazole-4-carboxylate: step 1/2. This chain is Phosphoribosylaminoimidazole-succinocarboxamide synthase, found in Thermococcus sibiricus (strain DSM 12597 / MM 739).